Consider the following 171-residue polypeptide: Small ribosomal subunit protein uS4 (171 aa).

In terms of domain architecture, S4 RNA-binding spans 101–165 (RRLQTVVYRK…SSLSDELHPE (65 aa)). The segment at 148–171 (SSVGFDEHSSLSDELHPERAEAQE) is disordered. Residues 152–171 (FDEHSSLSDELHPERAEAQE) show a composition bias toward basic and acidic residues.

The protein belongs to the universal ribosomal protein uS4 family. As to quaternary structure, part of the 30S ribosomal subunit. Contacts protein S5. The interaction surface between S4 and S5 is involved in control of translational fidelity.

In terms of biological role, one of the primary rRNA binding proteins, it binds directly to 16S rRNA where it nucleates assembly of the body of the 30S subunit. Its function is as follows. With S5 and S12 plays an important role in translational accuracy. The sequence is that of Small ribosomal subunit protein uS4 from Haloarcula marismortui (strain ATCC 43049 / DSM 3752 / JCM 8966 / VKM B-1809) (Halobacterium marismortui).